Here is a 129-residue protein sequence, read N- to C-terminus: Small ribosomal subunit protein uS11 (129 aa).

This sequence belongs to the universal ribosomal protein uS11 family. In terms of assembly, part of the 30S ribosomal subunit. Interacts with proteins S7 and S18. Binds to IF-3.

Functionally, located on the platform of the 30S subunit, it bridges several disparate RNA helices of the 16S rRNA. Forms part of the Shine-Dalgarno cleft in the 70S ribosome. The chain is Small ribosomal subunit protein uS11 from Rhodopseudomonas palustris (strain BisB18).